The primary structure comprises 620 residues: Glutathione-regulated potassium-efflux system protein KefC (620 aa).

Residues 1-3 (MDS) are Periplasmic-facing. Residues 4 to 24 (HTLLQALIYLGSAALIVPIAV) traverse the membrane as a helical segment. Position 25 (arginine 25) is a topological domain, cytoplasmic. The helical transmembrane segment at 26 to 46 (LGLGSVLGYLIAGCIIGPWGL) threads the bilayer. Topologically, residues 47-53 (RLVTDAE) are periplasmic. A helical transmembrane segment spans residues 54–74 (SILHFAEIGVVLMLFVIGLEL). The Cytoplasmic segment spans residues 75–89 (DPQRLWKLRASVFGG). A helical transmembrane segment spans residues 90 to 110 (GALQMGVCGGLIGLFCMFLGL). At 111 to 113 (RWQ) the chain is on the periplasmic side. The helical transmembrane segment at 114-134 (VAELIGMTLALSSTAIAMQAM) threads the bilayer. The Cytoplasmic segment spans residues 135–148 (NERNLTVSQVGRSA). A helical membrane pass occupies residues 149 to 169 (FAVLLFQDIAAIPLVAMIPLL). At 170–177 (AASGASTT) the chain is on the periplasmic side. The chain crosses the membrane as a helical span at residues 178–198 (LGAFALSALKVAGALALVVLL). Residues 199–213 (GRYVTRPALRFVARS) lie on the Cytoplasmic side of the membrane. A helical transmembrane segment spans residues 214 to 233 (GLREVFSAVALFLVFGFGLL). Residues 234 to 236 (LEE) lie on the Periplasmic side of the membrane. The chain crosses the membrane as a helical span at residues 237–254 (VGLSMAMGAFLAGVLLAS). At 255–269 (SEYRHALESDIEPFK) the chain is on the cytoplasmic side. A helical membrane pass occupies residues 270–290 (GLLLGLFFIGVGMSIDFGTLV). The Periplasmic portion of the chain corresponds to 291 to 293 (ENP). The helical transmembrane segment at 294–314 (LRILLLLAGFLAIKIVMLWLV) threads the bilayer. At 315 to 326 (ARPLGVPAKQRR) the chain is on the cytoplasmic side. Residues 327–347 (WFAVLLGQGSEFAFVVFGAAQ) form a helical membrane-spanning segment. Over 348–358 (MADVLEPEWAK) the chain is Periplasmic. The chain crosses the membrane as a helical span at residues 359 to 379 (ALTLAVALSMAATPIFLVLLT). The Cytoplasmic segment spans residues 380 to 620 (RMEKTATGEA…ADEPEVKPSI (241 aa)). Residues 399-518 (QPRVIVAGFG…AGVAMPERET (120 aa)) form the RCK N-terminal domain. The tract at residues 599-620 (QGTAEGKHSGEVADEPEVKPSI) is disordered.

Belongs to the monovalent cation:proton antiporter 2 (CPA2) transporter (TC 2.A.37) family. KefC subfamily. In terms of assembly, homodimer. Interacts with the regulatory subunit KefF.

Its subcellular location is the cell inner membrane. In terms of biological role, pore-forming subunit of a potassium efflux system that confers protection against electrophiles. Catalyzes K(+)/H(+) antiport. This Salmonella typhimurium (strain LT2 / SGSC1412 / ATCC 700720) protein is Glutathione-regulated potassium-efflux system protein KefC.